The primary structure comprises 156 residues: Small ribosomal subunit protein uS7 (156 aa).

It belongs to the universal ribosomal protein uS7 family. As to quaternary structure, part of the 30S ribosomal subunit. Contacts proteins S9 and S11.

In terms of biological role, one of the primary rRNA binding proteins, it binds directly to 16S rRNA where it nucleates assembly of the head domain of the 30S subunit. Is located at the subunit interface close to the decoding center, probably blocks exit of the E-site tRNA. The chain is Small ribosomal subunit protein uS7 from Clostridium novyi (strain NT).